We begin with the raw amino-acid sequence, 255 residues long: tRNA (guanine-N(1)-)-methyltransferase (255 aa).

Residues glycine 113 and isoleucine 133–leucine 138 each bind S-adenosyl-L-methionine.

Belongs to the RNA methyltransferase TrmD family. Homodimer.

The protein resides in the cytoplasm. The enzyme catalyses guanosine(37) in tRNA + S-adenosyl-L-methionine = N(1)-methylguanosine(37) in tRNA + S-adenosyl-L-homocysteine + H(+). In terms of biological role, specifically methylates guanosine-37 in various tRNAs. This is tRNA (guanine-N(1)-)-methyltransferase from Escherichia coli O6:K15:H31 (strain 536 / UPEC).